We begin with the raw amino-acid sequence, 356 residues long: uncharacterized protein (356 aa).

The first 21 residues, 1-21 (MKLITAPCRALLALPFCYAFS), serve as a signal peptide directing secretion.

This is an uncharacterized protein from Escherichia coli (strain K12).